A 360-amino-acid chain; its full sequence is Carbamoyl phosphate synthase small chain (360 aa).

A CPSase region spans residues 1-169 (MTKRLLILED…TKTAYPAPGI (169 aa)). Residues Ser46, Gly220, and Gly222 each coordinate L-glutamine. Residues 172–358 (NIVLVDFGLK…LEMIDSWRCT (187 aa)) form the Glutamine amidotransferase type-1 domain. Cys247 (nucleophile) is an active-site residue. 5 residues coordinate L-glutamine: Met248, Gln251, Asn289, Gly291, and Tyr292. Active-site residues include His331 and Asp333.

Belongs to the CarA family. In terms of assembly, composed of two chains; the small (or glutamine) chain promotes the hydrolysis of glutamine to ammonia, which is used by the large (or ammonia) chain to synthesize carbamoyl phosphate. Tetramer of heterodimers (alpha,beta)4.

The enzyme catalyses hydrogencarbonate + L-glutamine + 2 ATP + H2O = carbamoyl phosphate + L-glutamate + 2 ADP + phosphate + 2 H(+). It carries out the reaction L-glutamine + H2O = L-glutamate + NH4(+). It participates in amino-acid biosynthesis; L-arginine biosynthesis; carbamoyl phosphate from bicarbonate: step 1/1. Its pathway is pyrimidine metabolism; UMP biosynthesis via de novo pathway; (S)-dihydroorotate from bicarbonate: step 1/3. Its function is as follows. Small subunit of the glutamine-dependent carbamoyl phosphate synthetase (CPSase). CPSase catalyzes the formation of carbamoyl phosphate from the ammonia moiety of glutamine, carbonate, and phosphate donated by ATP, constituting the first step of 2 biosynthetic pathways, one leading to arginine and/or urea and the other to pyrimidine nucleotides. The small subunit (glutamine amidotransferase) binds and cleaves glutamine to supply the large subunit with the substrate ammonia. The protein is Carbamoyl phosphate synthase small chain of Streptococcus pyogenes serotype M18 (strain MGAS8232).